The sequence spans 562 residues: Lamassu protein LmuB (562 aa).

In terms of biological role, component of antiviral defense system Lamassu type I, composed of LmuA and LmuB. Expression of Lamassu type I in B.subtilis (strain BEST7003) confers resistance to phages phi3T, SpBeta and SPR. May be an ATPase. The protein is Lamassu protein LmuB of Bacillus sp. (strain NCIM 5461 / CCTCC AB 2011126 / NIO-1130).